We begin with the raw amino-acid sequence, 472 residues long: Protein hedgehog (472 aa).

C84 carries N-palmitoyl cysteine lipidation. E149, D154, E185, D188, and D190 together coordinate Ca(2+). The Cholesterol glycine ester moiety is linked to residue G256.

The protein belongs to the hedgehog family. In terms of assembly, interacts with shf. Post-translationally, the C-terminal part of the hedgehog protein precursor displays an autoproteolysis activity that results in the cleavage of the full-length protein into two parts (N-product and C-product). In addition, the C-terminal part displays a cholesterol transferase activity that results by the covalent attachment of a cholesterol moiety to the C-terminal of the newly generated N-product. The N-product is the active species in both local and long-range signaling, whereas the C-product has no signaling activity. In terms of processing, cholesterylation is required for N-product targeting to lipid rafts and multimerization. N-palmitoylation by Rasp of the hedgehog N-product, within the secretory pathway, is required for the embryonic and larval patterning activities of the hedgehog signal.

It is found in the nucleus. Its subcellular location is the cytoplasm. The protein resides in the cell membrane. The enzyme catalyses glycyl-L-cysteinyl-[protein] + cholesterol + H(+) = [protein]-C-terminal glycyl cholesterol ester + N-terminal L-cysteinyl-[protein]. Its function is as follows. The C-terminal part of the hedgehog protein precursor displays an autoproteolysis activity that results in the cleavage of the full-length protein into two parts (N-product and C-product). In addition, the C-terminal part displays a cholesterol transferase activity that results by the covalent attachment of a cholesterol moiety to the C-terminal of the newly generated N-product. Once cleaved, the C-product has no signaling activity and diffuses from the cell. In terms of biological role, the dually lipidated hedgehog protein N-product is a morphogen which is essential for a variety of patterning events during development. Establishes the anterior-posterior axis of the embryonic segments and patterns the larval imaginal disks. Binds to the patched (ptc) receptor, which functions in association with smoothened (smo), to activate the transcription of target genes wingless (wg), decapentaplegic (dpp) and ptc. In the absence of hh, ptc represses the constitutive signaling activity of smo through fused (fu). Essential component of a signaling pathway which regulates the Duox-dependent gut immune response to bacterial uracil; required to activate Cad99C-dependent endosome formation, norpA-dependent Ca2+ mobilization and p38 MAPK, which are essential steps in the Duox-dependent production of reactive oxygen species (ROS) in response to intestinal bacterial infection. During photoreceptor differentiation, it up-regulates transcription of Ubr3, which in turn promotes the hh-signaling pathway by mediating the ubiquitination and degradation of cos. This is Protein hedgehog from Drosophila ananassae (Fruit fly).